The primary structure comprises 392 residues: Succinyl-diaminopimelate desuccinylase (392 aa).

His75 lines the Zn(2+) pocket. Asp77 is a catalytic residue. Residue Asp108 participates in Zn(2+) binding. The active-site Proton acceptor is the Glu147. 3 residues coordinate Zn(2+): Glu148, Glu176, and His365.

This sequence belongs to the peptidase M20A family. DapE subfamily. In terms of assembly, homodimer. Zn(2+) is required as a cofactor. Requires Co(2+) as cofactor.

The catalysed reaction is N-succinyl-(2S,6S)-2,6-diaminopimelate + H2O = (2S,6S)-2,6-diaminopimelate + succinate. The protein operates within amino-acid biosynthesis; L-lysine biosynthesis via DAP pathway; LL-2,6-diaminopimelate from (S)-tetrahydrodipicolinate (succinylase route): step 3/3. Catalyzes the hydrolysis of N-succinyl-L,L-diaminopimelic acid (SDAP), forming succinate and LL-2,6-diaminopimelate (DAP), an intermediate involved in the bacterial biosynthesis of lysine and meso-diaminopimelic acid, an essential component of bacterial cell walls. This chain is Succinyl-diaminopimelate desuccinylase, found in Rhodopseudomonas palustris (strain BisB18).